Here is a 649-residue protein sequence, read N- to C-terminus: Phosphomethylpyrimidine synthase (649 aa).

Substrate is bound by residues N235, M264, Y293, H329, 349-351, 390-393, and E429; these read SRG and DGLR. Residue H433 coordinates Zn(2+). Y456 is a substrate binding site. H497 is a binding site for Zn(2+). [4Fe-4S] cluster is bound by residues C577, C580, and C585. Residues 620 to 649 are disordered; that stretch reads GMRQKSQEFRDTGSELYHPAVGAKEAQLEE. Residues 621–632 are compositionally biased toward basic and acidic residues; sequence MRQKSQEFRDTG.

Belongs to the ThiC family. Homodimer. [4Fe-4S] cluster serves as cofactor.

It catalyses the reaction 5-amino-1-(5-phospho-beta-D-ribosyl)imidazole + S-adenosyl-L-methionine = 4-amino-2-methyl-5-(phosphooxymethyl)pyrimidine + CO + 5'-deoxyadenosine + formate + L-methionine + 3 H(+). Its pathway is cofactor biosynthesis; thiamine diphosphate biosynthesis. Catalyzes the synthesis of the hydroxymethylpyrimidine phosphate (HMP-P) moiety of thiamine from aminoimidazole ribotide (AIR) in a radical S-adenosyl-L-methionine (SAM)-dependent reaction. This Vibrio atlanticus (strain LGP32) (Vibrio splendidus (strain Mel32)) protein is Phosphomethylpyrimidine synthase.